Reading from the N-terminus, the 430-residue chain is Tektin-2 (430 aa).

Coiled coils occupy residues 80-162 (KCLT…FEQL) and 225-382 (NKDR…CKAN).

It belongs to the tektin family. Microtubule inner protein component of sperm flagellar doublet microtubules. May interact with CCDC172. Tyrosine phosphorylated. In terms of processing, ubiquitinated, leading to its degradation. Deubiquitinated by USP16, promoting its stability. In terms of tissue distribution, expressed at high levels in testis, trachea and fetal lung, and at lower levels in ovary, pituitary, adult lung, fetal brain and fetal kidney.

It localises to the cytoplasm. The protein localises to the cytoskeleton. Its subcellular location is the cilium axoneme. The protein resides in the flagellum axoneme. It is found in the microtubule organizing center. Microtubule inner protein (MIP) part of the dynein-decorated doublet microtubules (DMTs) in cilia and flagellar axoneme. Plays a key role in the assembly or attachment of the inner dynein arm to microtubules in sperm flagella and tracheal cilia. Forms filamentous polymers in the walls of ciliary and flagellar microtubules. The polypeptide is Tektin-2 (Homo sapiens (Human)).